Consider the following 398-residue polypeptide: MHKLTLDDVDVRGQRVLIRVDFNVPLDTSEDGSPCVGDDTRIRAALPTIRHVLDHGGKAILVSHLGRPGGQPDPDLSLACVADHLGTLIEERVRFSSNTVGDTVEEVINGMSEGSVILLENTRFDAGEKANDEAFATALANLADVYVNDAFGAAHRAHASTAGVAEFMDVAALGRLMEDEIEALTRVRDDPAHPMVAILGGSKVSDKLGTIRALSETADHLLIGGAMSYTFLKVLGHEVGASRVEADRLDTAEDLYEQAEGTITLPTDHVVAEAPEADATASVVEGDIPAELMGLDIGPATIDAYRDRILGAATVVWNGPMGVFEVDPFADGTTAIAEAMADATDDGAFSVVGGGDSVSALTRSGCDDRISHVSTGGGALLTFLEGAPLPGVEALTDA.

Residues 21-23 (DFN), R41, 64-67 (HLGR), R123, and R156 contribute to the substrate site. Residues K207, G294, E325, and 354–357 (GGDS) contribute to the ATP site.

This sequence belongs to the phosphoglycerate kinase family. As to quaternary structure, monomer.

It localises to the cytoplasm. It catalyses the reaction (2R)-3-phosphoglycerate + ATP = (2R)-3-phospho-glyceroyl phosphate + ADP. The protein operates within carbohydrate degradation; glycolysis; pyruvate from D-glyceraldehyde 3-phosphate: step 2/5. This chain is Phosphoglycerate kinase, found in Salinibacter ruber (strain DSM 13855 / M31).